A 529-amino-acid polypeptide reads, in one-letter code: Putative E3 ubiquitin-protein ligase ARI4 (529 aa).

Over residues 1-22 (MDDEYMSLEEEEDNCYPSEFDD) the composition is skewed to acidic residues. The interval 1–23 (MDDEYMSLEEEEDNCYPSEFDDH) is disordered. A TRIAD supradomain region spans residues 115–327 (KTMKCDICME…IAGHSCGRYK (213 aa)). 18 residues coordinate Zn(2+): C119, C122, C137, H139, C142, C145, C164, C169, C206, C212, C230, C232, C237, C240, H245, C250, C277, and C280. Residues 119–169 (CDICMEEDLSKYAMTRMECGHRFCNDCWKEHFTVRINEGEGKRIRCMAYKC) form an RING-type 1 zinc finger. Residues 186–250 (EKFDRFLIES…LSESHSPCSC (65 aa)) form an IBR-type zinc finger. Residues 277-305 (CPKCSKPIQKRDGCNHMTCKCGQHFCWLC) form an RING-type 2; atypical zinc finger. The active site involves C290. Residues C295, C297, C302, C305, H313, and C323 each contribute to the Zn(2+) site.

It belongs to the RBR family. Ariadne subfamily. Requires Zn(2+) as cofactor.

It carries out the reaction [E2 ubiquitin-conjugating enzyme]-S-ubiquitinyl-L-cysteine + [acceptor protein]-L-lysine = [E2 ubiquitin-conjugating enzyme]-L-cysteine + [acceptor protein]-N(6)-ubiquitinyl-L-lysine.. The protein operates within protein modification; protein ubiquitination. Its function is as follows. Might act as an E3 ubiquitin-protein ligase, or as part of E3 complex, which accepts ubiquitin from specific E2 ubiquitin-conjugating enzymes and then transfers it to substrates. The polypeptide is Putative E3 ubiquitin-protein ligase ARI4 (ARI4) (Arabidopsis thaliana (Mouse-ear cress)).